The primary structure comprises 508 residues: ATP synthase subunit alpha, chloroplastic (508 aa).

Residue 172-179 (GDRQTGKT) participates in ATP binding.

It belongs to the ATPase alpha/beta chains family. In terms of assembly, F-type ATPases have 2 components, CF(1) - the catalytic core - and CF(0) - the membrane proton channel. CF(1) has five subunits: alpha(3), beta(3), gamma(1), delta(1), epsilon(1). CF(0) has four main subunits: a, b, b' and c.

The protein resides in the plastid. It localises to the chloroplast thylakoid membrane. The catalysed reaction is ATP + H2O + 4 H(+)(in) = ADP + phosphate + 5 H(+)(out). Functionally, produces ATP from ADP in the presence of a proton gradient across the membrane. The alpha chain is a regulatory subunit. The polypeptide is ATP synthase subunit alpha, chloroplastic (Angiopteris evecta (Mule's foot fern)).